The sequence spans 403 residues: Argininosuccinate synthase (403 aa).

ATP-binding positions include 10–18 (AYSGGLDTS) and Ala-37. L-citrulline is bound at residue Tyr-89. Gly-119 contacts ATP. The L-aspartate site is built by Thr-121, Asn-125, and Asp-126. Position 125 (Asn-125) interacts with L-citrulline. 5 residues coordinate L-citrulline: Arg-129, Ser-178, Ser-187, Glu-263, and Tyr-275.

Belongs to the argininosuccinate synthase family. Type 1 subfamily. Homotetramer.

It is found in the cytoplasm. It carries out the reaction L-citrulline + L-aspartate + ATP = 2-(N(omega)-L-arginino)succinate + AMP + diphosphate + H(+). Its pathway is amino-acid biosynthesis; L-arginine biosynthesis; L-arginine from L-ornithine and carbamoyl phosphate: step 2/3. This is Argininosuccinate synthase from Idiomarina loihiensis (strain ATCC BAA-735 / DSM 15497 / L2-TR).